The sequence spans 291 residues: Nucleotide-binding protein lwe2422 (291 aa).

Residue 13-20 (GMSGAGKT) participates in ATP binding. Residue 63 to 66 (DLRG) coordinates GTP.

It belongs to the RapZ-like family.

Displays ATPase and GTPase activities. The sequence is that of Nucleotide-binding protein lwe2422 from Listeria welshimeri serovar 6b (strain ATCC 35897 / DSM 20650 / CCUG 15529 / CIP 8149 / NCTC 11857 / SLCC 5334 / V8).